Here is a 256-residue protein sequence, read N- to C-terminus: Na(+)-translocating NADH-quinone reductase subunit E (256 aa).

Transmembrane regions (helical) follow at residues 1-21, 50-70, 83-103, 123-143, 149-169, and 189-209; these read MWLG…AAFI, MSVA…HAFI, LASV…IAAF, GIFL…LFGI, FIPM…AIVI, and MGIS…LTGI. Polar residues predominate over residues 229 to 249; the sequence is ENTTNPLKESSSKHQPSISKA. The segment at 229-256 is disordered; the sequence is ENTTNPLKESSSKHQPSISKARTQRRSL.

The protein belongs to the NqrDE/RnfAE family. Composed of six subunits; NqrA, NqrB, NqrC, NqrD, NqrE and NqrF.

Its subcellular location is the cell inner membrane. The enzyme catalyses a ubiquinone + n Na(+)(in) + NADH + H(+) = a ubiquinol + n Na(+)(out) + NAD(+). In terms of biological role, NQR complex catalyzes the reduction of ubiquinone-1 to ubiquinol by two successive reactions, coupled with the transport of Na(+) ions from the cytoplasm to the periplasm. NqrA to NqrE are probably involved in the second step, the conversion of ubisemiquinone to ubiquinol. This Chlamydia pneumoniae (Chlamydophila pneumoniae) protein is Na(+)-translocating NADH-quinone reductase subunit E.